We begin with the raw amino-acid sequence, 106 residues long: Large ribosomal subunit protein uL24 (106 aa).

Belongs to the universal ribosomal protein uL24 family. Part of the 50S ribosomal subunit.

Its function is as follows. One of two assembly initiator proteins, it binds directly to the 5'-end of the 23S rRNA, where it nucleates assembly of the 50S subunit. Functionally, one of the proteins that surrounds the polypeptide exit tunnel on the outside of the subunit. The polypeptide is Large ribosomal subunit protein uL24 (Paracidovorax citrulli (strain AAC00-1) (Acidovorax citrulli)).